The following is a 150-amino-acid chain: Large ribosomal subunit protein bL9 (150 aa).

It belongs to the bacterial ribosomal protein bL9 family.

Binds to the 23S rRNA. This Buchnera aphidicola subsp. Acyrthosiphon pisum (strain 5A) protein is Large ribosomal subunit protein bL9.